Consider the following 281-residue polypeptide: AT-hook motif nuclear-localized protein 20 (281 aa).

Disordered regions lie at residues 43–85 (MNQS…APIF) and 216–247 (MEEE…DLSG). Positions 67–79 (RRPRGRPPGSKNK) form a DNA-binding region, a.T hook. In terms of domain architecture, PPC spans 91-229 (PNALRSHVLE…EDGGGSRQIH (139 aa)).

It is found in the nucleus. In terms of biological role, transcription factor that specifically binds AT-rich DNA sequences related to the nuclear matrix attachment regions (MARs). Negatively regulates plant innate immunity (PTI) to pathogens through the down-regulation of the PAMP-triggered NHO1 and FRK1 expression. This chain is AT-hook motif nuclear-localized protein 20, found in Arabidopsis thaliana (Mouse-ear cress).